The chain runs to 532 residues: Mitogen-activated protein kinase kinase mkk1 (532 aa).

The 271-residue stretch at isoleucine 235–methionine 505 folds into the Protein kinase domain. ATP is bound by residues leucine 241 to valine 249 and lysine 264. Residue aspartate 362 is the Proton acceptor of the active site.

This sequence belongs to the protein kinase superfamily. STE Ser/Thr protein kinase family. MAP kinase kinase subfamily.

The catalysed reaction is L-seryl-[protein] + ATP = O-phospho-L-seryl-[protein] + ADP + H(+). It carries out the reaction L-threonyl-[protein] + ATP = O-phospho-L-threonyl-[protein] + ADP + H(+). In terms of biological role, mitogen-activated protein kinase kinase, part of the mkh1-mkk1-spm1 MAPK cascade that regulates regulates vegetative growth, conidial formation, colony surface hydrophobicity, osmotic stress, cell wall integrity maintenance, carbon and nitrogen source utilization, chitin distribution, septa formation, and pathogenicity. The polypeptide is Mitogen-activated protein kinase kinase mkk1 (Cytospora mali (Apple Valsa canker fungus)).